The chain runs to 495 residues: Carbohydrate oxidase (495 aa).

An N-terminal signal peptide occupies residues 1-22 (MRSAFILALGLITASADALVTR). The FAD-binding PCMH-type domain occupies 55–229 (LPYIPTAIAQ…AVWKLATFPA (175 aa)). The 6-(S-cysteinyl)-8alpha-(pros-histidyl)-FAD (His-Cys) cross-link spans 92–154 (HSYASFGFGG…YGRAISHGTC (63 aa)). Residues N244 and N417 are each glycosylated (N-linked (GlcNAc...) asparagine).

The protein belongs to the oxygen-dependent FAD-linked oxidoreductase family. The cofactor is FAD. Post-translationally, the FAD cofactor is bound via a bicovalent 6-S-cysteinyl, 8alpha-N1-histidyl FAD linkage.

It localises to the secreted. The catalysed reaction is beta-D-glucose + O2 = D-glucono-1,5-lactone + H2O2. It catalyses the reaction D-galactose + O2 = D-galactono-1,5-lactone + H2O2. It carries out the reaction D-cellobiose + O2 = D-cellobiono-1,5-lactone + H2O2. The enzyme catalyses beta-lactose + O2 = lactobiono-1,5-lactone + H2O2. The catalysed reaction is D-maltose + O2 = D-maltobiono-1,5-lactone + H2O2. It catalyses the reaction D-xylose + O2 = D-xylono-1,5-lactone + H2O2. Catalyzes the selective oxidation of C1 hydroxyl moieties on mono-, oligo- and polysaccharides with concomitant reduction of molecular oxygen to hydrogen peroxide. This results in the formation of the corresponding lactones, which typically undergo spontaneous hydrolysis. Carbohydrate oxidase is able to oxidize a variety of substrates including D-glucose, D-galactose, D-xylose, D-maltose, D-cellobiose, and lactose. In addition, among various oligosaccharides, the enzyme preferred tetrameric dextrins, indicating a favorable interaction of four linked glucose units with the substrate binding pocket. In Microdochium nivale (Pink snow mold), this protein is Carbohydrate oxidase.